The following is a 241-amino-acid chain: MSDSKEVPSLPFLRHLLEELDSHEDSLLLFLCHDAAPGCTTVTQALCSLSQQRKLTLAALVEMLYVLQRMDLLKSRFGLSKEGAEQLLGTSFLTRYRKLMVCVGEELDSSELRALRLFACNLNPSLSTALSESSRFVELVLALENVGLVSPSSVSVLADMLRTLRRLDLCQQLVEYEQQEQARYRYCYAASPSLPVRTLRRGHGASEHEQLCMPVQESSDSPELLRTPVQESSSDSPEQTT.

2 consecutive DED domains span residues 8-78 (PSLP…SRFG) and 95-175 (RYRK…QLVE). The disordered stretch occupies residues 212 to 241 (CMPVQESSDSPELLRTPVQESSSDSPEQTT). Polar residues predominate over residues 229–241 (VQESSSDSPEQTT).

In terms of assembly, associates with the death-inducing signaling complex (DISC) formed by TNFRSF6/FAS, FADD and CASP8. Interacts with FADD. Interacts with host TRAF2. Interacts with host NEMO/IKBKG (via N-terminus). Interacts with host SH3BP4; this interaction plays an important in the suppression of host autophagy.

Its subcellular location is the host cytoplasm. The protein resides in the host nucleus. Its function is as follows. Inhibits TNFRSF1A, TNFRSF6/FAS and TNFRSF12 induced apoptosis. Directs the degradation of host NFKBIB but not NFKBIA. Also suppresses host NF-kappa-B activation by interacting with and preventing ubiquitination of host NEMO/IKBKG, the NF-kappa-B essential modulator subunit of the IKK complex. Interferes with host CASP8/caspase-8 recruitment and activation at the death-inducing signaling complex (DISC). May lead to higher virus production and contribute to virus persistence and oncogenicity. Also participates in the inhibition of host autophagy by interacting with host SH3BP4. The protein is Viral CASP8 and FADD-like apoptosis regulator of Homo sapiens (Human).